A 556-amino-acid polypeptide reads, in one-letter code: Neurofilament light polypeptide (556 aa).

Position 2 is an N-acetylserine (Ser-2). A head region spans residues 2–94 (SSYGYDPFFP…KSIRSQERAQ (93 aa)). In terms of domain architecture, IF rod spans 91-402 (ERAQLQDLND…KLLEGEETRL (312 aa)). The tract at residues 95–126 (LQDLNDRFACFIERVHELEQQNKVLEAELLVL) is coil 1A. Residues 127–139 (RQKHAEPSRFRAL) form a linker 1 region. The coil 1B stretch occupies residues 140-235 (YEQEIRELRL…KVHEEELAEL (96 aa)). The segment at 236–254 (QAQIQYAHLSVEMDVSAKP) is linker 12. Residues 255–273 (DLSAALRDIRAQYEKLAAR) are coil 2A. Residues 274–282 (NMQNAEEWF) form a linker 2 region. Residues 283–398 (RSRFTVLSES…AAYRKLLEGE (116 aa)) form a coil 2B region. The interval 399–445 (ETRLSFTSVGSITSGYTQTAPTFGRSAYSGLQSTSYLMTTRSFPTYY) is tail, subdomain A. The segment at 399–556 (ETRLSFTSVG…KEETEVKKKA (158 aa)) is tail. The interval 446-556 (SSHVQEEQIE…KEETEVKKKA (111 aa)) is tail, subdomain B (acidic). Low complexity predominate over residues 464 to 473 (KAGEAKAAPA). The segment at 464-556 (KAGEAKAAPA…KEETEVKKKA (93 aa)) is disordered. The segment covering 474-540 (EEGEEEEKEE…AEETGEEEKE (67 aa)) has biased composition (acidic residues). Residues 541-556 (EKEAAGKEETEVKKKA) are compositionally biased toward basic and acidic residues.

Belongs to the intermediate filament family. As to quaternary structure, forms homodimers (in vitro).

The protein resides in the cell projection. It localises to the axon. It is found in the cytoplasm. The protein localises to the cytoskeleton. Its function is as follows. Neurofilaments usually contain three intermediate filament proteins: NEFL, NEFM, and NEFH which are involved in the maintenance of neuronal caliber. May additionally cooperate with the neuronal intermediate filament proteins to form neuronal filamentous networks. The chain is Neurofilament light polypeptide (NEFL) from Coturnix japonica (Japanese quail).